A 379-amino-acid polypeptide reads, in one-letter code: Mannitol-1-phosphate 5-dehydrogenase (379 aa).

3–14 (ALHFGAGNIGRG) provides a ligand contact to NAD(+).

The protein belongs to the mannitol dehydrogenase family.

It catalyses the reaction D-mannitol 1-phosphate + NAD(+) = beta-D-fructose 6-phosphate + NADH + H(+). The polypeptide is Mannitol-1-phosphate 5-dehydrogenase (Actinobacillus pleuropneumoniae serotype 3 (strain JL03)).